The sequence spans 200 residues: MELTEKSRPRIGVMGGTFDPIHHGHLVAASEVAQSFDLDEVVFVPTGRPWQKGAVTPAEHRYLMTVIATASNPRFTVSRVDVDRIGPTYTIDTLRDLHEERPEAELFFITGADAIAQILSWRDVEELWKLAHFVAVSRPGHDLSISGLPQQDVSLLEVPALAISSTDCRDRVNRGMPVWYLVPDGVVQYISKHHLYRSVA.

It belongs to the NadD family.

It carries out the reaction nicotinate beta-D-ribonucleotide + ATP + H(+) = deamido-NAD(+) + diphosphate. Its pathway is cofactor biosynthesis; NAD(+) biosynthesis; deamido-NAD(+) from nicotinate D-ribonucleotide: step 1/1. Catalyzes the reversible adenylation of nicotinate mononucleotide (NaMN) to nicotinic acid adenine dinucleotide (NaAD). The polypeptide is Probable nicotinate-nucleotide adenylyltransferase (Leifsonia xyli subsp. xyli (strain CTCB07)).